Here is a 2524-residue protein sequence, read N- to C-terminus: Highly reducing polyketide synthase Preu5 (2524 aa).

Residues 5–426 (DTPIAIIGLS…GSNSAIVIEK (422 aa)) enclose the Ketosynthase family 3 (KS3) domain. Catalysis depends on for beta-ketoacyl synthase activity residues Cys175, His310, and His350. Residues 431-470 (DELGHETNGTNGVSVSNGVNGSNGFTNGSNGTNGHAENGN) are disordered. A compositionally biased stretch (low complexity) spans 437–464 (TNGTNGVSVSNGVNGSNGFTNGSNGTNG). A malonyl-CoA:ACP transacylase (MAT) domain region spans residues 559-882 (VFTGQGAQYA…TYLPSLVRNV (324 aa)). Residue Ser648 is the For malonyltransferase activity of the active site. The N-terminal hotdog fold stretch occupies residues 950-1084 (HELLGRRVVS…GQIEPEFADM (135 aa)). The 315-residue stretch at 950–1264 (HELLGRRVVS…FRNIGSADEN (315 aa)) folds into the PKS/mFAS DH domain. Residues 950 to 1266 (HELLGRRVVS…NIGSADENID (317 aa)) are dehydratase (DH) domain. Catalysis depends on His982, which acts as the Proton acceptor; for dehydratase activity. A C-terminal hotdog fold region spans residues 1102–1264 (ADLLEHDIEG…FRNIGSADEN (163 aa)). The Proton donor; for dehydratase activity role is filled by Asp1171. The interval 1418–1611 (SQAVGDLADN…IPGVWDSEVQ (194 aa)) is methyltransferase (CMet) domain. Residues 1825–2139 (GSPDSIYFRR…SGDHLGKIVV (315 aa)) form an enoylreductase (ER) domain region. The ketoreductase (KR) domain stretch occupies residues 2164–2339 (GTYLVTGGTR…HTVSIALPIV (176 aa)). Residues 2445–2522 (DPLEGLTEAL…ALATDILSQR (78 aa)) enclose the Carrier domain. At Ser2482 the chain carries O-(pantetheine 4'-phosphoryl)serine.

Pantetheine 4'-phosphate is required as a cofactor.

Functionally, highly reducing polyketide synthase; part of a gene cluster that mediates the biosynthesis of a yet unidentified natural product. The chain is Highly reducing polyketide synthase Preu5 from Preussia isomera (Coprophilous fungus).